We begin with the raw amino-acid sequence, 266 residues long: 3-methyl-2-oxobutanoate hydroxymethyltransferase (266 aa).

Mg(2+) contacts are provided by Asp45 and Asp84. Residues 45-46 (DS), Asp84, and Lys113 each bind 3-methyl-2-oxobutanoate. Glu115 lines the Mg(2+) pocket. Glu183 serves as the catalytic Proton acceptor.

Belongs to the PanB family. In terms of assembly, homodecamer; pentamer of dimers. Requires Mg(2+) as cofactor.

Its subcellular location is the cytoplasm. The enzyme catalyses 3-methyl-2-oxobutanoate + (6R)-5,10-methylene-5,6,7,8-tetrahydrofolate + H2O = 2-dehydropantoate + (6S)-5,6,7,8-tetrahydrofolate. It functions in the pathway cofactor biosynthesis; (R)-pantothenate biosynthesis; (R)-pantoate from 3-methyl-2-oxobutanoate: step 1/2. Catalyzes the reversible reaction in which hydroxymethyl group from 5,10-methylenetetrahydrofolate is transferred onto alpha-ketoisovalerate to form ketopantoate. The chain is 3-methyl-2-oxobutanoate hydroxymethyltransferase from Coxiella burnetii (strain CbuK_Q154) (Coxiella burnetii (strain Q154)).